The sequence spans 413 residues: cAMP-dependent protein kinase regulatory subunit (413 aa).

Positions 1 to 145 (MADSSSFPGT…DSWTPPCHPK (145 aa)) are disordered. Positions 24–161 (SPIQKISEEE…RLKTAVSNNF (138 aa)) are dimerization and phosphorylation. A compositionally biased stretch (low complexity) spans 58-67 (GNSFNGDNGS). Residues 121–138 (TSVSAESLNPTSAGSDSW) show a composition bias toward polar residues. Residue serine 122 is modified to Phosphoserine. 3',5'-cyclic AMP is bound by residues 162-291 (LFSH…FLEE), glutamate 240, arginine 249, 294-413 (LLSS…PSPS), glutamate 361, and arginine 370.

The protein belongs to the cAMP-dependent kinase regulatory chain family. Tetramer, composed of 2 regulatory (R) and 2 catalytic (C) subunits. In the presence of cAMP it dissociates into 2 active monomeric C subunits and an R dimer.

The polypeptide is cAMP-dependent protein kinase regulatory subunit (pkaR) (Aspergillus fumigatus (strain ATCC MYA-4609 / CBS 101355 / FGSC A1100 / Af293) (Neosartorya fumigata)).